The chain runs to 476 residues: Cobyric acid synthase (476 aa).

Positions 242 to 428 (AFRVVVPVPP…LHGLFDTPDA (187 aa)) constitute a GATase cobBQ-type domain. Cys-323 functions as the Nucleophile in the catalytic mechanism. His-420 is an active-site residue.

It belongs to the CobB/CobQ family. CobQ subfamily.

It functions in the pathway cofactor biosynthesis; adenosylcobalamin biosynthesis. Its function is as follows. Catalyzes amidations at positions B, D, E, and G on adenosylcobyrinic A,C-diamide. NH(2) groups are provided by glutamine, and one molecule of ATP is hydrogenolyzed for each amidation. The protein is Cobyric acid synthase of Janthinobacterium sp. (strain Marseille) (Minibacterium massiliensis).